Consider the following 183-residue polypeptide: Acireductone dioxygenase (183 aa).

A disordered region spans residues 1–21; that stretch reads MVQAWYMDSDTTTDQREEHQL. His90, His92, Glu96, and His135 together coordinate Fe(2+). Ni(2+) is bound by residues His90, His92, Glu96, and His135.

The protein belongs to the acireductone dioxygenase (ARD) family. Fe(2+) serves as cofactor. It depends on Ni(2+) as a cofactor.

It localises to the cytoplasm. It is found in the nucleus. The catalysed reaction is 1,2-dihydroxy-5-(methylsulfanyl)pent-1-en-3-one + O2 = 4-methylsulfanyl-2-oxobutanoate + formate + 2 H(+). It catalyses the reaction 1,2-dihydroxy-5-(methylsulfanyl)pent-1-en-3-one + O2 = 3-(methylsulfanyl)propanoate + CO + formate + 2 H(+). It functions in the pathway amino-acid biosynthesis; L-methionine biosynthesis via salvage pathway; L-methionine from S-methyl-5-thio-alpha-D-ribose 1-phosphate: step 5/6. Catalyzes 2 different reactions between oxygen and the acireductone 1,2-dihydroxy-3-keto-5-methylthiopentene (DHK-MTPene) depending upon the metal bound in the active site. Fe-containing acireductone dioxygenase (Fe-ARD) produces formate and 2-keto-4-methylthiobutyrate (KMTB), the alpha-ketoacid precursor of methionine in the methionine recycle pathway. Ni-containing acireductone dioxygenase (Ni-ARD) produces methylthiopropionate, carbon monoxide and formate, and does not lie on the methionine recycle pathway. The sequence is that of Acireductone dioxygenase from Ixodes scapularis (Black-legged tick).